We begin with the raw amino-acid sequence, 93 residues long: Putative pterin-4-alpha-carbinolamine dehydratase (93 aa).

Belongs to the pterin-4-alpha-carbinolamine dehydratase family.

The enzyme catalyses (4aS,6R)-4a-hydroxy-L-erythro-5,6,7,8-tetrahydrobiopterin = (6R)-L-erythro-6,7-dihydrobiopterin + H2O. The polypeptide is Putative pterin-4-alpha-carbinolamine dehydratase (Chloroflexus aurantiacus (strain ATCC 29366 / DSM 635 / J-10-fl)).